A 131-amino-acid chain; its full sequence is ATP synthase lipid-binding protein, mitochondrial (131 aa).

The N-terminal 56 residues, 1 to 56 (MLSAARLIAPAARSAIFSNAAVVRPLAAVSTQTQLVPAAPAQLSAVRSFQTTSVTK), are a transit peptide targeting the mitochondrion. Residues 72–92 (VGVAGSGAGIGTVFGSLIIGY) form a helical membrane-spanning segment. An N6,N6,N6-trimethyllysine modification is found at Lys-99. A helical transmembrane segment spans residues 107 to 127 (ILGFALSEAMGLFCLMMAFLL).

Belongs to the ATPase C chain family. In terms of assembly, F-type ATPases have 2 components, CF(1) - the catalytic core - and CF(0) - the membrane proton channel. CF(1) has five subunits: alpha(3), beta(3), gamma(1), delta(1), epsilon(1). CF(0) has three main subunits: a, b and c. In terms of processing, trimethylated by ATPSCKMT at Lys-99. Methylation may be required for proper incorporation of the C subunit into the ATP synthase complex and mitochondrial respiration.

The protein resides in the mitochondrion membrane. Functionally, mitochondrial membrane ATP synthase (F(1)F(0) ATP synthase or Complex V) produces ATP from ADP in the presence of a proton gradient across the membrane which is generated by electron transport complexes of the respiratory chain. F-type ATPases consist of two structural domains, F(1) - containing the extramembraneous catalytic core and F(0) - containing the membrane proton channel, linked together by a central stalk and a peripheral stalk. During catalysis, ATP synthesis in the catalytic domain of F(1) is coupled via a rotary mechanism of the central stalk subunits to proton translocation. Part of the complex F(0) domain. A homomeric c-ring of probably 10 subunits is part of the complex rotary element. This Manduca sexta (Tobacco hawkmoth) protein is ATP synthase lipid-binding protein, mitochondrial.